A 1115-amino-acid chain; its full sequence is MTSANFNINGFGDVKLTPYSPLLGYKAWDSFIGSIQSLSDLIYNVDNNRNKMEITVNNAIQAADSFLSSIGRDNKITNTASLLASLDNIFLNLRNVSRDIRETGKFKPNDIQQAIGDIFIAAGDGLQYIKQQTEAMAQSKFLPTKLKTGLNDVLNSRMLKSSTVLQHELNYLGFKIKDYGNERLGESIMNIDDFTPSKIANFFADPDTYSNVLEEVSRFIYSLVPDDANPWKGGEDYIGRGISEWGELLEKWYKQDFLPYLEKEWDQFPKFEDWLPEFPEWAREWLKLDPKRSGKYHVYDPLALDLDGDGIETVAAKGFAGALFDHRNQGIRTATGWVSADDGLLVRDLNGNGIIDNGAELFGDNTKLADGSFAKHGYAALAELDSNGDNIINAADAAFQTLRVWQDLNQDGISQANELRTLEELGIQSLDLAYKDVNKNLGNGNTLAQQGSYTKTDGTTAKMGDLLLAADNLHSRFKDKVELTAEQAKAANLAGIGRLRDLREAAALSGDLANMLKAYSAAETKEAQLALLDNLIHKWAETDSNWGKKSPMRLSTDWTQTANEGIALTPSQVAQLKKNALVSLSDKAKAAIDAARDRIAVLDAYTGQDSSTLYYMSEEDALNIVKVTNDTYDHLAKNIYQNLLFQTRLQPYLNQISFKMENDTFTLDFSGLVQAFNHVKETNPQKAFVDLAEMLAYGELRSWYEGRRLMADYVEEAKKAGKFEDYQKVLGQETVALLAKTSGTQADDILQNVGFGHNKNVSLYGNDGNDTLIGGAGNDYLEGGSGSDTYVFGKGFGQDTVYNYDYATGRKDIIRFTDGITADMLTFTREGNHLLIKAKDDSGQVTVQSYFQNDGSGAYRIDEIHFDNGKVLDVATVKELVQQSTDGSDRLYAYQSGSTLNGGLGDDYLYGADGNDLLNGDAGNDSIYSGNGNDTLDGGEGNDALYGYNGNDALNGGEGNDHLNGEDGNDTLIGGAGNDYLEGGSGSDTYVFGEGFGQDTVYNYHVDKNSDTMHFKGFKAADVHFIRSGSDLVLSASEQDNVRISGFFYGENHRVDTFVFDDAAISNPDFAKYINAGNNLVQSMSVFGSNTAATGGNVDANIQSVQQPLLVTPSA.

Hemolysin-type calcium-binding repeat units lie at residues 755 to 772, 773 to 790, 901 to 918, 919 to 936, 937 to 954, 955 to 972, and 973 to 990; these read FGHNKNVSLYGNDGNDTL, IGGAGNDYLEGGSGSDTY, NGGLGDDYLYGADGNDLL, NGDAGNDSIYSGNGNDTL, DGGEGNDALYGYNGNDAL, and NGGEGNDHLNGEDGNDTL.

It belongs to the RTX prokaryotic toxin (TC 1.C.11) family.

The protein localises to the cell outer membrane. Its subcellular location is the secreted. Functionally, may participate in the pathogenesis of meningococcal disease. This Neisseria meningitidis serogroup C protein is Iron-regulated protein FrpA (frpA).